A 335-amino-acid chain; its full sequence is DNA-directed RNA polymerase subunit alpha (335 aa).

Positions 1 to 233 (MIRDEISVSI…DLFIPFLHGE (233 aa)) are alpha N-terminal domain (alpha-NTD). Residues 264–335 (KEKIAFQLIF…KLFAIDPPRN (72 aa)) are alpha C-terminal domain (alpha-CTD).

It belongs to the RNA polymerase alpha chain family. In terms of assembly, in plastids the minimal PEP RNA polymerase catalytic core is composed of four subunits: alpha, beta, beta', and beta''. When a (nuclear-encoded) sigma factor is associated with the core the holoenzyme is formed, which can initiate transcription.

The protein resides in the plastid. Its subcellular location is the chloroplast. It catalyses the reaction RNA(n) + a ribonucleoside 5'-triphosphate = RNA(n+1) + diphosphate. Its function is as follows. DNA-dependent RNA polymerase catalyzes the transcription of DNA into RNA using the four ribonucleoside triphosphates as substrates. In Pinus thunbergii (Japanese black pine), this protein is DNA-directed RNA polymerase subunit alpha.